Reading from the N-terminus, the 159-residue chain is uncharacterized protein (159 aa).

2 disordered regions span residues 1-23 (MEQDWQPGEEVTPGPEPCSKGQA) and 91-110 (AGGGRREQSQKPCSNGGPAA).

This is an uncharacterized protein from Homo sapiens (Human).